The sequence spans 457 residues: Forkhead box protein N3 (457 aa).

Residues 1-24 (MGPVMPASKKAESSGISVSSGLSQ) are disordered. Positions 13-23 (SSGISVSSGLS) are enriched in low complexity. 3 positions are modified to phosphoserine: Ser-83, Ser-85, and Ser-97. The segment at 86–109 (PVQDLDDDTPPSPAHSDMPYDARQ) is disordered. A DNA-binding region (fork-head) is located at residues 114-210 (KPPYSFSCLI…QALKKTPYHP (97 aa)). The interval 285–422 (RTESEPPCGS…PESDDEEMKE (138 aa)) is disordered. Composition is skewed to low complexity over residues 308 to 331 (SSAK…SSSS) and 342 to 353 (GSQEGSEGSFQS). Basic and acidic residues predominate over residues 354 to 376 (HESHSEPEEEDRKPSPKEGKDAL). Basic residues predominate over residues 384 to 396 (QHKKRQHFAKARK). A Phosphoserine modification is found at Ser-415.

Interacts through its C-terminus with the C-terminus of SNW1/SKIP.

It is found in the nucleus. Functionally, acts as a transcriptional repressor. May be involved in DNA damage-inducible cell cycle arrests (checkpoints). In Mus musculus (Mouse), this protein is Forkhead box protein N3 (Foxn3).